We begin with the raw amino-acid sequence, 135 residues long: S-protein homolog 29 (135 aa).

The signal sequence occupies residues 1-24 (MKNSSKIFVVLSIILFYVISSCHG). Asn110 is a glycosylation site (N-linked (GlcNAc...) asparagine).

This sequence belongs to the plant self-incompatibility (S1) protein family.

The protein localises to the secreted. In Arabidopsis thaliana (Mouse-ear cress), this protein is S-protein homolog 29.